The primary structure comprises 498 residues: Probable global transactivator (498 aa).

The Helicase ATP-binding domain maps to 43-206 (RERRGRPHGG…YAIIHFLRCR (164 aa)). 55–63 (ADDMGLGKT) is an ATP binding site. The DEAH box signature appears at 157–160 (DEAH). Positions 337–493 (ELVQRVLDTP…RTALNYEDIK (157 aa)) constitute a Helicase C-terminal domain.

The protein belongs to the SNF2/RAD54 helicase family.

The polypeptide is Probable global transactivator (GTA) (Orgyia pseudotsugata (Douglas-fir tussock moth)).